A 464-amino-acid chain; its full sequence is Argininosuccinate lyase (464 aa).

This sequence belongs to the lyase 1 family. Argininosuccinate lyase subfamily.

The protein localises to the cytoplasm. It carries out the reaction 2-(N(omega)-L-arginino)succinate = fumarate + L-arginine. Its pathway is amino-acid biosynthesis; L-arginine biosynthesis; L-arginine from L-ornithine and carbamoyl phosphate: step 3/3. This is Argininosuccinate lyase from Pseudomonas fluorescens (strain ATCC BAA-477 / NRRL B-23932 / Pf-5).